Reading from the N-terminus, the 522-residue chain is Zinc finger protein STOP1 homolog (522 aa).

2 stretches are compositionally biased toward polar residues: residues 1–12 and 19–40; these read MDSGLGRSSETS and MASN…SSMD. Disordered stretches follow at residues 1–43 and 234–260; these read MDSG…DQPP and CGGE…EREN. The segment covering 244–260 has biased composition (basic and acidic residues); sequence MEDHDVKESDDGGEREN. The C2H2-type 1 zinc finger occupies 282–304; sequence HFCLICGKGFKRDANLRMHMRGH. The C2H2-type 2; atypical zinc-finger motif lies at 390–421; that stretch reads KHCGRDKWLCSCGTTFSRKDKLFGHVALFQGH.

It localises to the nucleus. In terms of biological role, probable transcription factor that may be involved in aluminum tolerance. The chain is Zinc finger protein STOP1 homolog from Oryza sativa subsp. japonica (Rice).